A 101-amino-acid polypeptide reads, in one-letter code: NAD(P)H-quinone oxidoreductase subunit 4L, chloroplastic (101 aa).

3 consecutive transmembrane segments (helical) span residues 2 to 22 (MLEHVLVLGAYLFSIGIYGLI), 32 to 52 (MCLELILNAVNINLVTFSDFF), and 61 to 81 (ILSIFVIAIAAAEAAIGLAIV).

This sequence belongs to the complex I subunit 4L family. In terms of assembly, NDH is composed of at least 16 different subunits, 5 of which are encoded in the nucleus.

The protein resides in the plastid. The protein localises to the chloroplast thylakoid membrane. It catalyses the reaction a plastoquinone + NADH + (n+1) H(+)(in) = a plastoquinol + NAD(+) + n H(+)(out). The enzyme catalyses a plastoquinone + NADPH + (n+1) H(+)(in) = a plastoquinol + NADP(+) + n H(+)(out). In terms of biological role, NDH shuttles electrons from NAD(P)H:plastoquinone, via FMN and iron-sulfur (Fe-S) centers, to quinones in the photosynthetic chain and possibly in a chloroplast respiratory chain. The immediate electron acceptor for the enzyme in this species is believed to be plastoquinone. Couples the redox reaction to proton translocation, and thus conserves the redox energy in a proton gradient. This is NAD(P)H-quinone oxidoreductase subunit 4L, chloroplastic from Buxus microphylla (Littleleaf boxwood).